Consider the following 154-residue polypeptide: UPF0756 membrane protein RBAM_026200 (154 aa).

A run of 4 helical transmembrane segments spans residues 14-34 (AIAL…LIVI), 54-74 (WGVT…DIGF), 87-107 (WIAL…LTLL), and 117-137 (LVIG…GPLI).

Belongs to the UPF0756 family.

It localises to the cell membrane. This chain is UPF0756 membrane protein RBAM_026200, found in Bacillus velezensis (strain DSM 23117 / BGSC 10A6 / LMG 26770 / FZB42) (Bacillus amyloliquefaciens subsp. plantarum).